Reading from the N-terminus, the 219-residue chain is MFDANCLKLMFVAGSQDFYHIKGGKNDRINALLDALELALQSKITAFQFRQKGDLALQDPIEIKQLALECQKLCQKYGAPFIVNDEVQLALELKADGVHVGQEDMAIEEVMALCKKRLFIGLSVNTLEQALKVRHLDGVAYFGVGPIFPTQSKKDKQVVGVELLKKIKDSGIKKPLIAIGGITAHNASKLREYGGIAVISAITQAKDKALAVGKLLKNA.

4-amino-2-methyl-5-(diphosphooxymethyl)pyrimidine is bound by residues 48–52 (QFRQK) and Asn84. Mg(2+) is bound by residues Asp85 and Asp104. Residue Ser123 coordinates 4-amino-2-methyl-5-(diphosphooxymethyl)pyrimidine. 150 to 152 (TQS) provides a ligand contact to 2-[(2R,5Z)-2-carboxy-4-methylthiazol-5(2H)-ylidene]ethyl phosphate. 4-amino-2-methyl-5-(diphosphooxymethyl)pyrimidine is bound at residue Lys153. 2-[(2R,5Z)-2-carboxy-4-methylthiazol-5(2H)-ylidene]ethyl phosphate contacts are provided by residues Gly181 and 199-200 (IS).

This sequence belongs to the thiamine-phosphate synthase family. Mg(2+) is required as a cofactor.

It carries out the reaction 2-[(2R,5Z)-2-carboxy-4-methylthiazol-5(2H)-ylidene]ethyl phosphate + 4-amino-2-methyl-5-(diphosphooxymethyl)pyrimidine + 2 H(+) = thiamine phosphate + CO2 + diphosphate. The enzyme catalyses 2-(2-carboxy-4-methylthiazol-5-yl)ethyl phosphate + 4-amino-2-methyl-5-(diphosphooxymethyl)pyrimidine + 2 H(+) = thiamine phosphate + CO2 + diphosphate. The catalysed reaction is 4-methyl-5-(2-phosphooxyethyl)-thiazole + 4-amino-2-methyl-5-(diphosphooxymethyl)pyrimidine + H(+) = thiamine phosphate + diphosphate. The protein operates within cofactor biosynthesis; thiamine diphosphate biosynthesis; thiamine phosphate from 4-amino-2-methyl-5-diphosphomethylpyrimidine and 4-methyl-5-(2-phosphoethyl)-thiazole: step 1/1. Condenses 4-methyl-5-(beta-hydroxyethyl)thiazole monophosphate (THZ-P) and 2-methyl-4-amino-5-hydroxymethyl pyrimidine pyrophosphate (HMP-PP) to form thiamine monophosphate (TMP). The protein is Thiamine-phosphate synthase of Helicobacter pylori (strain Shi470).